Consider the following 693-residue polypeptide: Elongation factor G (693 aa).

A tr-type G domain is found at 8-282 (EKTRNIGIMA…AVIDYLPSPL (275 aa)). GTP is bound by residues 17 to 24 (AHIDAGKT), 81 to 85 (DTPGH), and 135 to 138 (NKMD).

Belongs to the TRAFAC class translation factor GTPase superfamily. Classic translation factor GTPase family. EF-G/EF-2 subfamily.

It is found in the cytoplasm. In terms of biological role, catalyzes the GTP-dependent ribosomal translocation step during translation elongation. During this step, the ribosome changes from the pre-translocational (PRE) to the post-translocational (POST) state as the newly formed A-site-bound peptidyl-tRNA and P-site-bound deacylated tRNA move to the P and E sites, respectively. Catalyzes the coordinated movement of the two tRNA molecules, the mRNA and conformational changes in the ribosome. The sequence is that of Elongation factor G from Staphylococcus carnosus (strain TM300).